A 1863-amino-acid polypeptide reads, in one-letter code: Transient receptor potential cation channel subfamily M member 7 (1863 aa).

N-acetylmethionine is present on Met-1. Residues 1–850 lie on the Cytoplasmic side of the membrane; that stretch reads MSQKSWIEST…ITRKFYAFYH (850 aa). Ser-101 bears the Phosphoserine mark. Positions 544 to 555 are enriched in low complexity; the sequence is NRRSGRNTSSST. Residues 544-574 form a disordered region; sequence NRRSGRNTSSSTPQLRKSHETFGNRADKKEK. Residues 560–573 are compositionally biased toward basic and acidic residues; the sequence is KSHETFGNRADKKE. The helical transmembrane segment at 851–876 threads the bilayer; that stretch reads APIVKFWFNTLAYLGFLMLYTFVVLV. The Extracellular segment spans residues 877–882; that stretch reads KMEQLP. A helical membrane pass occupies residues 883–904; the sequence is SVQEWIVIAYIFTYAIEKVREV. The Cytoplasmic portion of the chain corresponds to 905–923; it reads FMSEAGKISQKIKVWFSDY. Residues 924 to 943 form a helical membrane-spanning segment; the sequence is FNVSDTIAIISFFVGFGLRF. Topologically, residues 944–956 are extracellular; that stretch reads GAKWNYINAYDNH. Residues 957–980 traverse the membrane as a helical segment; that stretch reads VFVAGRLIYCLNIIFWYVRLLDFL. Residues 981-999 are Cytoplasmic-facing; it reads AVNQQAGPYVMMIGKMVAN. A helical transmembrane segment spans residues 1000–1023; sequence MFYIVVIMALVLLSFGVPRKAILY. The Extracellular segment spans residues 1024 to 1025; the sequence is PH. The segment at residues 1026-1066 is an intramembrane region (pore-forming); sequence EEPSWSLAKDIVFHPYWMIFGEVYAYEIDVCANDSTLPTIC. Residues 1067 to 1069 are Extracellular-facing; it reads GPG. The chain crosses the membrane as a helical span at residues 1070–1098; that stretch reads TWLTPFLQAVYLFVQYIIMVNLLIAFFNN. Topologically, residues 1099 to 1863 are cytoplasmic; that stretch reads VYLQVKAISN…EATNSVRLML (765 aa). 3 S-palmitoyl cysteine lipidation sites follow: Cys-1143, Cys-1144, and Cys-1146. Thr-1163 carries the post-translational modification Phosphothreonine. Phosphoserine is present on residues Ser-1191, Ser-1193, Ser-1224, Ser-1255, and Ser-1258. Positions 1198–1250 form a coiled coil; that stretch reads RVTFERVEQMSIQIKEVGDRVNYIKRSLQSLDSQIGHLQDLSALTVDTLKTLT. Thr-1265 carries the phosphothreonine modification. Phosphoserine occurs at positions 1300, 1357, 1360, 1385, 1386, 1389, 1394, 1395, and 1403. Residues 1380 to 1418 are disordered; sequence NQKLGSSPNSSPHMSSPPTKFSVSTPSQPSCKSHLESTT. Positions 1385–1397 are enriched in low complexity; it reads SSPNSSPHMSSPP. Residues 1398–1410 are compositionally biased toward polar residues; sequence TKFSVSTPSQPSC. The residue at position 1404 (Thr-1404) is a Phosphothreonine. Residues Ser-1406 and Ser-1445 each carry the phosphoserine modification. Thr-1454 is modified (phosphothreonine). Phosphoserine is present on Ser-1455. Thr-1466 and Thr-1470 each carry phosphothreonine. 6 positions are modified to phosphoserine: Ser-1491, Ser-1498, Ser-1502, Ser-1511, Ser-1525, and Ser-1531. The interval 1498–1539 is disordered; that stretch reads SRRASTEDSPEVDSKAALLPDWLRDRPSNREMPSEGGTLNGL. The segment covering 1519–1530 has biased composition (basic and acidic residues); it reads WLRDRPSNREMP. At Thr-1535 the chain carries Phosphothreonine. Ser-1541 is modified (phosphoserine). Thr-1549 bears the Phosphothreonine mark. Phosphoserine occurs at positions 1565 and 1567. Phosphothreonine is present on Thr-1581. The Alpha-type protein kinase domain occupies 1592–1822; it reads ILNNSMSSWS…CCRKLKLPDL (231 aa). A phosphoserine mark is found at Ser-1596 and Ser-1613. The ADP site is built by Gly-1619, Gly-1620, Leu-1621, Arg-1622, and Lys-1646. Ser-1658 is modified (phosphoserine). The residue at position 1683 (Thr-1683) is a Phosphothreonine. ADP contacts are provided by Glu-1718, Glu-1719, and Met-1721. Position 1751 (His-1751) interacts with Zn(2+). Asp-1765 serves as the catalytic Proton acceptor. Asp-1775 contacts ADP. Phosphoserine is present on Ser-1777. Zn(2+)-binding residues include His-1808, Cys-1810, and Cys-1814. Thr-1828 is subject to Phosphothreonine. The disordered stretch occupies residues 1838–1863; the sequence is ESSDLNLQSGNSTKESEATNSVRLML. Positions 1841 to 1863 are enriched in polar residues; it reads DLNLQSGNSTKESEATNSVRLML. Ser-1846, Ser-1849, and Ser-1858 each carry phosphoserine.

The protein in the C-terminal section; belongs to the protein kinase superfamily. Alpha-type protein kinase family. ALPK subfamily. It in the N-terminal section; belongs to the transient receptor (TC 1.A.4) family. LTrpC subfamily. TRPM7 sub-subfamily. As to quaternary structure, homodimer. Homotetramer. Forms heteromers with TRPM6; heteromeric channels are functionally different from the homomeric channels. Interacts with PLCB1. Zn(2+) is required as a cofactor. Post-translationally, palmitoylated; palmitoylation at Cys-1143, Cys-1144 and Cys-1146 promotes TRPM7 trafficking from the Golgi to the surface membrane. Autophosphorylated; autophosphorylation regulates TRPM7 kinase activity towards its substrates. In terms of processing, the C-terminal kinase domain can be cleaved from the channel segment in a cell-type-specific fashion. TRPM7 is cleaved by caspase-8, dissociating the kinase from the ion-conducting pore. The cleaved kinase fragments (M7CKs) can translocate to the cell nucleus and binds chromatin-remodeling complex proteins in a Zn(2+)-dependent manner to ultimately phosphorylate specific Ser/Thr residues of histones. In terms of tissue distribution, found to be expressed in brain and skeletal muscle, with stronger signals in kidney, heart, liver and spleen.

It localises to the cell membrane. It is found in the cytoplasmic vesicle membrane. Its subcellular location is the nucleus. The enzyme catalyses L-seryl-[protein] + ATP = O-phospho-L-seryl-[protein] + ADP + H(+). It catalyses the reaction L-threonyl-[protein] + ATP = O-phospho-L-threonyl-[protein] + ADP + H(+). The catalysed reaction is Mg(2+)(in) = Mg(2+)(out). It carries out the reaction Ca(2+)(in) = Ca(2+)(out). The enzyme catalyses Zn(2+)(in) = Zn(2+)(out). Channel displays constitutive activity. Channel activity is negatively regulated by cytosolic Mg(2+), Mg-ATP and low intracellular pH. Resting free cytosolic Mg(2+) and Mg-ATP concentrations seem to be sufficient to block native TRPM7 channel activity. TRPM7 channel activity is highly dependent on membrane levels of phosphatidylinositol 4,5 bisphosphate (PIP2). PIP2 hydrolysis negatively regulates TRPM7 channel activity. TRPM7 kinase activity does not affect channel activity. The kinase activity is controlled through the autophosphorylation of a serine/threonine-rich region located N-terminal to the catalytic domain. Functionally, bifunctional protein that combines an ion channel with an intrinsic kinase domain, enabling it to modulate cellular functions either by conducting ions through the pore or by phosphorylating downstream proteins via its kinase domain. The channel is highly permeable to divalent cations, specifically calcium (Ca2+), magnesium (Mg2+) and zinc (Zn2+) and mediates their influx. Controls a wide range of biological processes such as Ca2(+), Mg(2+) and Zn(2+) homeostasis, vesicular Zn(2+) release channel and intracellular Ca(2+) signaling, embryonic development, immune responses, cell motility, proliferation and differentiation. The C-terminal alpha-kinase domain autophosphorylates cytoplasmic residues of TRPM7. TRPM7 phosphorylates SMAD2, suggesting that TRPM7 kinase may play a role in activating SMAD signaling pathways. In vitro, TRPM7 kinase phosphorylates ANXA1 (annexin A1), myosin II isoforms and a variety of proteins with diverse cellular functions. Its function is as follows. The cleaved channel exhibits substantially higher current and potentiates Fas receptor signaling. In terms of biological role, the C-terminal kinase domain can be cleaved from the channel segment in a cell-type-specific fashion. In immune cells, the TRPM7 kinase domain is clipped from the channel domain by caspases in response to Fas-receptor stimulation. The cleaved kinase fragments can translocate to the nucleus, and bind chromatin-remodeling complex proteins in a Zn(2+)-dependent manner to ultimately phosphorylate specific Ser/Thr residues of histones known to be functionally important for cell differentiation and embryonic development. This Mus musculus (Mouse) protein is Transient receptor potential cation channel subfamily M member 7 (Trpm7).